Here is a 468-residue protein sequence, read N- to C-terminus: Cytochrome P450-like protein L532 (468 aa).

A run of 2 helical transmembrane segments spans residues 22 to 42 (WFAY…FGLI) and 172 to 192 (VTVL…GVDV). Cys-415 contributes to the heme binding site.

It belongs to the cytochrome P450 family. Heme is required as a cofactor.

The protein resides in the host membrane. Its subcellular location is the virion. The polypeptide is Cytochrome P450-like protein L532 (Acanthamoeba polyphaga mimivirus (APMV)).